Reading from the N-terminus, the 475-residue chain is Ribulose bisphosphate carboxylase large chain (475 aa).

Residues 1-2 (MS) constitute a propeptide that is removed on maturation. Proline 3 carries the N-acetylproline modification. An N6,N6,N6-trimethyllysine modification is found at lysine 14. 2 residues coordinate substrate: asparagine 123 and threonine 173. Lysine 175 serves as the catalytic Proton acceptor. Residue lysine 177 coordinates substrate. Lysine 201, aspartate 203, and glutamate 204 together coordinate Mg(2+). At lysine 201 the chain carries N6-carboxylysine. The active-site Proton acceptor is the histidine 294. Residues arginine 295, histidine 327, and serine 379 each contribute to the substrate site.

Belongs to the RuBisCO large chain family. Type I subfamily. As to quaternary structure, heterohexadecamer of 8 large chains and 8 small chains; disulfide-linked. The disulfide link is formed within the large subunit homodimers. Mg(2+) serves as cofactor. Post-translationally, the disulfide bond which can form in the large chain dimeric partners within the hexadecamer appears to be associated with oxidative stress and protein turnover.

It localises to the plastid. Its subcellular location is the chloroplast. The catalysed reaction is 2 (2R)-3-phosphoglycerate + 2 H(+) = D-ribulose 1,5-bisphosphate + CO2 + H2O. It catalyses the reaction D-ribulose 1,5-bisphosphate + O2 = 2-phosphoglycolate + (2R)-3-phosphoglycerate + 2 H(+). RuBisCO catalyzes two reactions: the carboxylation of D-ribulose 1,5-bisphosphate, the primary event in carbon dioxide fixation, as well as the oxidative fragmentation of the pentose substrate in the photorespiration process. Both reactions occur simultaneously and in competition at the same active site. The protein is Ribulose bisphosphate carboxylase large chain of Cedrus deodara (Deodar cedar).